The following is a 252-amino-acid chain: Imidazole glycerol phosphate synthase subunit HisF (252 aa).

Residues Asp-11 and Asp-130 contribute to the active site.

The protein belongs to the HisA/HisF family. As to quaternary structure, heterodimer of HisH and HisF.

It is found in the cytoplasm. It catalyses the reaction 5-[(5-phospho-1-deoxy-D-ribulos-1-ylimino)methylamino]-1-(5-phospho-beta-D-ribosyl)imidazole-4-carboxamide + L-glutamine = D-erythro-1-(imidazol-4-yl)glycerol 3-phosphate + 5-amino-1-(5-phospho-beta-D-ribosyl)imidazole-4-carboxamide + L-glutamate + H(+). Its pathway is amino-acid biosynthesis; L-histidine biosynthesis; L-histidine from 5-phospho-alpha-D-ribose 1-diphosphate: step 5/9. In terms of biological role, IGPS catalyzes the conversion of PRFAR and glutamine to IGP, AICAR and glutamate. The HisF subunit catalyzes the cyclization activity that produces IGP and AICAR from PRFAR using the ammonia provided by the HisH subunit. The polypeptide is Imidazole glycerol phosphate synthase subunit HisF (Bacillus cereus (strain G9842)).